Consider the following 438-residue polypeptide: Protein DAY-LENGTH-DEPENDENT DELAYED-GREENING 1, chloroplastic (438 aa).

Residues 1–54 (MSLMSSSMVLCHCLSFSSQNPDPESSSSSLLRYKPCDSISLWGKRRKKLWRFVP) constitute a chloroplast transit peptide. The next 4 helical transmembrane spans lie at 216–236 (FLAVLILIPWALDFLAHDYLL), 314–334 (AFANIWSDMVFGISLFVLLYA), 359–379 (AFLIILITDIFLGYHSESGWE), and 398–418 (ITIFICLVPVIMDACVKLWLF).

It belongs to the CemA family.

The protein localises to the plastid. Its subcellular location is the chloroplast envelope. It is found in the chloroplast membrane. It carries out the reaction K(+)(in) + H(+)(out) = K(+)(out) + H(+)(in). The enzyme catalyses Ca(2+)(in) + H(+)(out) = Ca(2+)(out) + H(+)(in). In terms of biological role, promotes K(+)/H(+) antiport activity supporting K(+) efflux to control H(+) homeostasis in chloroplasts. Also able to ensure Ca(2+)/H(+) antiport activity in vitro. Essential for chloroplast pH regulation and optimization of non-photochemical quenching (NPQ), a regulatory mechanism that dissipates excess light energy; acts downstream of PSBS but independently from PGR5 and FLAP1. The sequence is that of Protein DAY-LENGTH-DEPENDENT DELAYED-GREENING 1, chloroplastic from Arabidopsis thaliana (Mouse-ear cress).